A 1026-amino-acid chain; its full sequence is Beta-galactosidase (1026 aa).

Positions 104 and 203 each coordinate substrate. D203 provides a ligand contact to Na(+). Mg(2+) contacts are provided by E418, H420, and E463. Substrate contacts are provided by residues E463 and 539–542; that span reads EYAH. The active-site Proton donor is the E463. E539 functions as the Nucleophile in the catalytic mechanism. Residue N599 participates in Mg(2+) binding. The Na(+) site is built by F603 and N606. 2 residues coordinate substrate: N606 and W1002.

The protein belongs to the glycosyl hydrolase 2 family. Homotetramer. It depends on Mg(2+) as a cofactor. Na(+) is required as a cofactor.

The enzyme catalyses Hydrolysis of terminal non-reducing beta-D-galactose residues in beta-D-galactosides.. The polypeptide is Beta-galactosidase (Erwinia tasmaniensis (strain DSM 17950 / CFBP 7177 / CIP 109463 / NCPPB 4357 / Et1/99)).